Consider the following 489-residue polypeptide: Inactive receptor-like serine/threonine-protein kinase At2g40270 (489 aa).

The first 23 residues, 1–23 (MLFKMRSFVAFVLLLSWFGSCCS), serve as a signal peptide directing secretion. At 24–139 (LKDQAVDFLK…PRNSHSSVPL (116 aa)) the chain is on the extracellular side. The disordered stretch occupies residues 67–130 (KDLPSRKDRK…SAPLANSPIP (64 aa)). The segment covering 81–90 (AATTTPSSSP) has biased composition (low complexity). Residues 99 to 116 (TKASTVSEPQKRSSTQDV) are compositionally biased toward polar residues. A compositionally biased stretch (low complexity) spans 117–130 (SPSPSAPLANSPIP). The helical transmembrane segment at 140–160 (VVGCVGGAFFLLLVATGLYFF) threads the bilayer. Over 161 to 489 (TSKAGKTVNP…WAELEVLSTA (329 aa)) the chain is Cytoplasmic. In terms of domain architecture, Protein kinase spans 200–460 (EDFSNVIGSC…PTMQEVTGWL (261 aa)).

It belongs to the protein kinase superfamily. Ser/Thr protein kinase family.

It localises to the cell membrane. The sequence is that of Inactive receptor-like serine/threonine-protein kinase At2g40270 from Arabidopsis thaliana (Mouse-ear cress).